The following is a 246-amino-acid chain: Dihydroorotate dehydrogenase B (NAD(+)), electron transfer subunit (246 aa).

An FAD-binding FR-type domain is found at 3-97; it reads EKYTVEKVYE…TGPLGNGFNV (95 aa). Residues 50-53 and 72-73 contribute to the FAD site; these read RPIS and GT. C211, C216, C219, and C231 together coordinate [2Fe-2S] cluster.

This sequence belongs to the PyrK family. In terms of assembly, heterotetramer of 2 PyrK and 2 PyrD type B subunits. It depends on [2Fe-2S] cluster as a cofactor. Requires FAD as cofactor.

It functions in the pathway pyrimidine metabolism; UMP biosynthesis via de novo pathway; orotate from (S)-dihydroorotate (NAD(+) route): step 1/1. Its function is as follows. Responsible for channeling the electrons from the oxidation of dihydroorotate from the FMN redox center in the PyrD type B subunit to the ultimate electron acceptor NAD(+). The sequence is that of Dihydroorotate dehydrogenase B (NAD(+)), electron transfer subunit from Clostridium acetobutylicum (strain ATCC 824 / DSM 792 / JCM 1419 / IAM 19013 / LMG 5710 / NBRC 13948 / NRRL B-527 / VKM B-1787 / 2291 / W).